The following is a 364-amino-acid chain: MKLKTLALSLLAAGVLAGCSSHSSNMANTQMKSDKIIIAHRGASGYLPEHTLESKALAFAQHSDYLEQDLAMTKDGRLVVIHDHFLDGLTDVAKKFPYRHRKDGRYYVIDFTLKEIQSLEMTENFETKDGKQAQVYPNRFPLWKSHFRIHTFEDEIEFIQGLEKSTGKKVGIYPEIKAPWFHHQNGKDIATETLKVLKKYGYDKKTDMVYLQTFDFNELKRIKTELLPQMGMDLKLVQLIAYTDWKETQEKDPKGYWVNYNYDWMFKPGAMAEVVKYADGVGPGWYMLVNKEESKPDNIVYTPLVKELAQYNVEVHPYTVRKDALPEFFTDVNQMYDALLNKSGATGVFTDFPDTGVEFLKGIK.

The N-terminal stretch at 1 to 18 is a signal peptide; the sequence is MKLKTLALSLLAAGVLAG. The N-palmitoyl cysteine moiety is linked to residue C19. C19 carries the S-diacylglycerol cysteine lipid modification. The GP-PDE domain occupies 35 to 360; sequence KIIIAHRGAS…DFPDTGVEFL (326 aa). Residue H40 is the Proton acceptor of the active site. Positions 67 and 69 each coordinate Ca(2+). Residue H82 is the Proton donor of the active site. Position 175 (E175) interacts with Ca(2+).

This sequence belongs to the glycerophosphoryl diester phosphodiesterase family. Ca(2+) serves as cofactor. Contains both ester- and amide-linked fatty acids.

Its subcellular location is the cell outer membrane. It catalyses the reaction a sn-glycero-3-phosphodiester + H2O = an alcohol + sn-glycerol 3-phosphate + H(+). Functionally, glycerophosphodiester phosphodiesterase hydrolyzes glycerophosphodiesters into glycerol-3-phosphate (G3P) and the corresponding alcohol. Has a specific affinity for human immunoglobulin D myeloma protein. This is Glycerophosphodiester phosphodiesterase (glpQ) from Haemophilus influenzae (strain ATCC 51907 / DSM 11121 / KW20 / Rd).